A 259-amino-acid chain; its full sequence is Small ribosomal subunit protein eS1 (259 aa).

2 disordered regions span residues 1–23 (MAVG…KTAD) and 235–259 (ESKS…VDSV). Over residues 8–19 (KVTKGGKKGGKK) the composition is skewed to basic residues. The span at 246–259 (SRPDHYEPPKVDSV) shows a compositional bias: basic and acidic residues.

It belongs to the eukaryotic ribosomal protein eS1 family. As to quaternary structure, component of the small ribosomal subunit. Mature ribosomes consist of a small (40S) and a large (60S) subunit. The 40S subunit contains about 33 different proteins and 1 molecule of RNA (18S). The 60S subunit contains about 49 different proteins and 3 molecules of RNA (28S, 5.8S and 5S).

It localises to the cytoplasm. This chain is Small ribosomal subunit protein eS1, found in Schistosoma japonicum (Blood fluke).